The primary structure comprises 351 residues: Glycerol-1-phosphate dehydrogenase [NAD(P)+] (351 aa).

Residues 97-101 and 119-122 each bind NAD(+); these read GKVID and TSPS. Asp124 is a binding site for substrate. Ser128 lines the NAD(+) pocket. Residue Asp171 participates in substrate binding. Zn(2+) contacts are provided by Asp171 and His251. His255 contacts substrate. Position 267 (His267) interacts with Zn(2+).

The protein belongs to the glycerol-1-phosphate dehydrogenase family. As to quaternary structure, homodimer. Zn(2+) serves as cofactor.

The protein resides in the cytoplasm. The catalysed reaction is sn-glycerol 1-phosphate + NAD(+) = dihydroxyacetone phosphate + NADH + H(+). It catalyses the reaction sn-glycerol 1-phosphate + NADP(+) = dihydroxyacetone phosphate + NADPH + H(+). It participates in membrane lipid metabolism; glycerophospholipid metabolism. Its function is as follows. Catalyzes the NAD(P)H-dependent reduction of dihydroxyacetonephosphate (DHAP or glycerone phosphate) to glycerol 1-phosphate (G1P). The G1P thus generated is used as the glycerophosphate backbone of phospholipids in the cellular membranes of Archaea. In Saccharolobus islandicus (strain Y.N.15.51 / Yellowstone #2) (Sulfolobus islandicus), this protein is Glycerol-1-phosphate dehydrogenase [NAD(P)+].